We begin with the raw amino-acid sequence, 353 residues long: S-adenosylmethionine:tRNA ribosyltransferase-isomerase (353 aa).

It belongs to the QueA family. Monomer.

Its subcellular location is the cytoplasm. It carries out the reaction 7-aminomethyl-7-carbaguanosine(34) in tRNA + S-adenosyl-L-methionine = epoxyqueuosine(34) in tRNA + adenine + L-methionine + 2 H(+). Its pathway is tRNA modification; tRNA-queuosine biosynthesis. In terms of biological role, transfers and isomerizes the ribose moiety from AdoMet to the 7-aminomethyl group of 7-deazaguanine (preQ1-tRNA) to give epoxyqueuosine (oQ-tRNA). This Sodalis glossinidius (strain morsitans) protein is S-adenosylmethionine:tRNA ribosyltransferase-isomerase.